We begin with the raw amino-acid sequence, 424 residues long: Elongation factor 1-alpha (424 aa).

One can recognise a tr-type G domain in the interval 5-223 (KPHMNLVIIG…NALQVPAKPV (219 aa)). The G1 stretch occupies residues 14–21 (GHVDHGKS). 14–21 (GHVDHGKS) is a binding site for GTP. Residue serine 21 participates in Mg(2+) binding. Positions 70-74 (GVTID) are G2. The interval 91 to 94 (DAPG) is G3. GTP contacts are provided by residues 91–95 (DAPGH) and 148–151 (NKMD). The interval 148–151 (NKMD) is G4. The tract at residues 187–189 (SGY) is G5.

Belongs to the TRAFAC class translation factor GTPase superfamily. Classic translation factor GTPase family. EF-Tu/EF-1A subfamily.

The protein resides in the cytoplasm. The catalysed reaction is GTP + H2O = GDP + phosphate + H(+). Its function is as follows. GTP hydrolase that promotes the GTP-dependent binding of aminoacyl-tRNA to the A-site of ribosomes during protein biosynthesis. This is Elongation factor 1-alpha from Picrophilus torridus (strain ATCC 700027 / DSM 9790 / JCM 10055 / NBRC 100828 / KAW 2/3).